Here is a 473-residue protein sequence, read N- to C-terminus: MAP kinase-activated protein kinase 5 (473 aa).

A Protein kinase domain is found at 22–304 (INWTQKLGAG…IEGVLDHPWL (283 aa)). ATP-binding positions include 28–36 (LGAGISGPV) and Lys-51. The residue at position 115 (Ser-115) is a Phosphoserine; by PKA. The active-site Proton acceptor is the Asp-148. Thr-182 is subject to Phosphothreonine; by MAPK11, MAPK14, MAPK4, MAPK6 and PKA. Residues Ser-212 and Ser-354 each carry the phosphoserine modification. Positions 409 to 440 (ENEDEKLNEVMQEAWKYNRECKLLRDALQSFS) form a coiled coil.

It belongs to the protein kinase superfamily. CAMK Ser/Thr protein kinase family. Interacts with SQSTM1. Interacts with ERK3/MAPK6 and ERK4/MAPK4 (via FRIEDE motif); the interaction is direct. Interacts with YWHAE; the interaction prevents phosphorylation of HSP27/HSPB1 leading to disrupt F-actin polymerization. In terms of processing, phosphorylated on Thr-182 ERK3/MAPK6 or ERK4/MAPK4; which is the regulatory phosphorylation site and is located on the T-loop/loop 12, leading to activation. Phosphorylation at Thr-182 by p38-alpha/MAPK14, p38-beta/MAPK11 is subject to debate. Phosphorylated at Ser-115 by PKA/PRKACA, leading to localization to the cytoplasm. Autophosphorylated. Expressed ubiquitously.

The protein resides in the cytoplasm. It localises to the nucleus. It catalyses the reaction L-seryl-[protein] + ATP = O-phospho-L-seryl-[protein] + ADP + H(+). It carries out the reaction L-threonyl-[protein] + ATP = O-phospho-L-threonyl-[protein] + ADP + H(+). Its activity is regulated as follows. Activated following phosphorylation at Thr-182 by p38-alpha/MAPK14, p38-beta/MAPK11, ERK2/MAPK1, ERK3/MAPK6, and ERK4/MAPK4. Activated by stress-related extracellular stimuli; such as H(2)O(2), arsenite, anisomycin TNF alpha and also PMA and the calcium ionophore A23187; but to a lesser extent. In vitro, activated by SQSTM1. Inhibited by diterpenoid alkaloid noroxoaconitine. Its function is as follows. Tumor suppressor serine/threonine-protein kinase involved in mTORC1 signaling and post-transcriptional regulation. Phosphorylates FOXO3, ERK3/MAPK6, ERK4/MAPK4, HSP27/HSPB1, p53/TP53 and RHEB. Acts as a tumor suppressor by mediating Ras-induced senescence and phosphorylating p53/TP53. Involved in post-transcriptional regulation of MYC by mediating phosphorylation of FOXO3: phosphorylation of FOXO3 leads to promote nuclear localization of FOXO3, enabling expression of miR-34b and miR-34c, 2 post-transcriptional regulators of MYC that bind to the 3'UTR of MYC transcript and prevent MYC translation. Acts as a negative regulator of mTORC1 signaling by mediating phosphorylation and inhibition of RHEB. Part of the atypical MAPK signaling via its interaction with ERK3/MAPK6 or ERK4/MAPK4: the precise role of the complex formed with ERK3/MAPK6 or ERK4/MAPK4 is still unclear, but the complex follows a complex set of phosphorylation events: upon interaction with atypical MAPK (ERK3/MAPK6 or ERK4/MAPK4), ERK3/MAPK6 (or ERK4/MAPK4) is phosphorylated and then mediates phosphorylation and activation of MAPKAPK5, which in turn phosphorylates ERK3/MAPK6 (or ERK4/MAPK4). Mediates phosphorylation of HSP27/HSPB1 in response to PKA/PRKACA stimulation, inducing F-actin rearrangement. This chain is MAP kinase-activated protein kinase 5 (Mapkapk5), found in Mus musculus (Mouse).